Here is a 548-residue protein sequence, read N- to C-terminus: Probable malate:quinone oxidoreductase (548 aa).

The protein belongs to the MQO family. It depends on FAD as a cofactor.

The catalysed reaction is (S)-malate + a quinone = a quinol + oxaloacetate. Its pathway is carbohydrate metabolism; tricarboxylic acid cycle; oxaloacetate from (S)-malate (quinone route): step 1/1. This chain is Probable malate:quinone oxidoreductase, found in Escherichia coli O6:H1 (strain CFT073 / ATCC 700928 / UPEC).